The following is a 616-amino-acid chain: TAF6-like RNA polymerase II p300/CBP-associated factor-associated factor 65 kDa subunit 6L (616 aa).

Disordered stretches follow at residues 399 to 432 (SLLL…EDPS) and 455 to 539 (FGTG…GTRD). Serine 494 and serine 500 each carry phosphoserine. Asymmetric dimethylarginine occurs at positions 549, 555, and 587.

It belongs to the TAF6 family. In terms of assembly, the PCAF complex is composed of a number of TBP-associated factors (TAFS), such as TAF5, TAF5L, TAF6, TAF6L, TAF9, TAF10 and TAF12, PCAF, and also PCAF-associated factors (PAFs), such as TADA2L/ADA2, TADA3L/ADA3 and SPT3. Component of the STAGA transcription coactivator-HAT complex, at least composed of SUPT3H, GCN5L2, TAF5L, TAF6L, SUPT7L, TADA3L, TAD1L, TAF10, TAF12, TRRAP and TAF9.

The protein resides in the nucleus. Its function is as follows. Functions as a component of the PCAF complex. The PCAF complex is capable of efficiently acetylating histones in a nucleosomal context. The PCAF complex could be considered as the human version of the yeast SAGA complex. With TAF5L, acts as an epigenetic regulator essential for somatic reprogramming. Regulates target genes through H3K9ac deposition and MYC recruitment which trigger MYC regulatory network to orchestrate gene expression programs to control embryonic stem cell state. Functions with MYC to activate target gene expression through RNA polymerase II pause release. The chain is TAF6-like RNA polymerase II p300/CBP-associated factor-associated factor 65 kDa subunit 6L from Mus musculus (Mouse).